Consider the following 580-residue polypeptide: Putative adenine deaminase YerA (580 aa).

Ser399 bears the Phosphoserine mark.

Belongs to the metallo-dependent hydrolases superfamily. Adenine deaminase family.

The catalysed reaction is adenine + H2O + H(+) = hypoxanthine + NH4(+). This chain is Putative adenine deaminase YerA (yerA), found in Bacillus subtilis (strain 168).